The chain runs to 86 residues: Signal recognition particle 9 kDa protein (86 aa).

It belongs to the SRP9 family. In terms of assembly, heterodimer with SRP14; binds RNA as heterodimer. Component of a signal recognition particle complex that consists of a 7SL RNA molecule of 300 nucleotides and six protein subunits: SRP72, SRP68, SRP54, SRP19, SRP14 and SRP9.

The protein resides in the cytoplasm. Functionally, component of the signal recognition particle (SRP) complex, a ribonucleoprotein complex that mediates the cotranslational targeting of secretory and membrane proteins to the endoplasmic reticulum (ER). SRP9 together with SRP14 and the Alu portion of the SRP RNA, constitutes the elongation arrest domain of SRP. The complex of SRP9 and SRP14 is required for SRP RNA binding. The polypeptide is Signal recognition particle 9 kDa protein (Srp9) (Mus musculus (Mouse)).